A 260-amino-acid polypeptide reads, in one-letter code: uncharacterized protein (260 aa).

Positions 1 to 38 form a coiled coil; that stretch reads MNWTREIEQYKQVVASYKLKMKRMEMKISDISEEKRQS.

This is an uncharacterized protein from Caenorhabditis elegans.